A 144-amino-acid chain; its full sequence is Virulence protein STM3117 (144 aa).

Positions 23 to 143 (RIDHLVLTVS…DGNLIEISQY (121 aa)) constitute a VOC domain.

Its function is as follows. Is critically involved in promoting the replication of S.typhimurium cells inside host macrophages, suggesting a role in the establishment of bacterial colonization within macrophages. May be involved in the biosynthesis and modification of the peptidoglycan layer of the cell wall. This chain is Virulence protein STM3117, found in Salmonella typhimurium (strain LT2 / SGSC1412 / ATCC 700720).